Here is a 347-residue protein sequence, read N- to C-terminus: MIIAVDVDGGDYAPKEIIKGALKAAQEYKIGLILLGKKEVIHVHAGHYLKKLPIEIVHCPQTVTFNEHAVEAIKGKPQSAIVIGTSLVKQGKADAFISAGNTGAVLAAAFFILGKIDGVERPALGAIITTRPHIPSLLIDAGANAECRPNHLDEFAHLGNIYAKQVLGLENPRIGLLNNGEEEAKGTKLTLETHQLLKKSKLNFIGNIEGHDISLNKADVIVTDGFTGNIVLKTLEGLGDALLKVRKVGHAIDSAAHLRGRALLADVGLGSMVKGMDFEECGGACLLGVKGTIIVAHGRSHARAIKNAIGLAKRTAEKGVDKLIAEDIKSRTKAGTEGDPKNVNTPV.

This sequence belongs to the PlsX family. In terms of assembly, homodimer. Probably interacts with PlsY.

The protein resides in the cytoplasm. The catalysed reaction is a fatty acyl-[ACP] + phosphate = an acyl phosphate + holo-[ACP]. It participates in lipid metabolism; phospholipid metabolism. In terms of biological role, catalyzes the reversible formation of acyl-phosphate (acyl-PO(4)) from acyl-[acyl-carrier-protein] (acyl-ACP). This enzyme utilizes acyl-ACP as fatty acyl donor, but not acyl-CoA. The sequence is that of Phosphate acyltransferase from Dehalococcoides mccartyi (strain ATCC BAA-2100 / JCM 16839 / KCTC 5957 / BAV1).